The chain runs to 554 residues: MEFPASVASLSANTVGSNDVLRRSIAYHPNIWGDFFLAHTSEFMEISIAEKEEHERLKEEIKKLLVQTEYDSILKLELIDSIQRLGVGYHFEKEIDRILRYVHQTYPIYDTENKDLRMLALRFRLLRQQGFHVPFDVLSEFIDAEGNLTESIAYDIQGILSLYEASNYGVLGEEILDKALDSCSSRLESLITDTDDDRLSRQVKEALKIPISKTLTRLGARKFISMYKEDDSHNEKLLKFAMLDFNMVQRLHQNELSHLTRWWKELDFANKLPFARDRLVECYFWIMGVYYEPRHEIARKILTKVIYMASVLDDIYDVYGTLDELTLFTSFVRRWDISGIDELPTYMRIYLRALFDVYVEMEEEMGKIGKSYAIEYAKEEMKRLAEVYFQEAQWFFSKYKPTMQEYMKVALLSSGYMMMTINSLAVIKDPITKKEFDWVVSEPPILKSSSIITRLMDDLAGYGSEEKHSAVHLYMNEKGVSEEEAFQELRKQVKNSWKNINKECLKLRPASVPILTTVVNFTRVIIVLYTDEDAYGNSKTKTKDMIKSILVDPV.

Mn(2+) is bound by residues Asp-313 and Asp-317. Positions 313 to 317 (DDIYD) match the DDXXD motif motif. 2 homodimerization regions span residues 319 to 325 (YGTLDEL) and 391 to 427 (EAQW…LAVI). Positions 457 and 465 each coordinate Mn(2+).

This sequence belongs to the terpene synthase family. As to quaternary structure, homodimer. The cofactor is Mn(2+). Requires Mg(2+) as cofactor. As to expression, expressed in peltate glandular trichomes. Present at low levels in flowers, leaves and stems.

It carries out the reaction (2E,6E)-farnesyl diphosphate = (-)-(E)-beta-caryophyllene + diphosphate. The catalysed reaction is (2E,6E)-farnesyl diphosphate = alpha-humulene + diphosphate. It participates in secondary metabolite biosynthesis; terpenoid biosynthesis. Functionally, involved in the biosynthesis of phenolic sesquiterpenes natural products. Sesquiterpene synthase converting (2E,6E)-farnesyl diphosphate (FPP) to (E)-beta-caryophyllene and alpha-humulene. The chain is (E)-beta-caryophyllene synthase from Origanum vulgare (Wild marjoram).